The sequence spans 68 residues: Large ribosomal subunit protein uL30 (68 aa).

This sequence belongs to the universal ribosomal protein uL30 family. In terms of assembly, part of the 50S ribosomal subunit.

The chain is Large ribosomal subunit protein uL30 from Bartonella quintana (strain Toulouse) (Rochalimaea quintana).